Consider the following 316-residue polypeptide: Putative transketolase C-terminal section (316 aa).

Belongs to the transketolase family. Thiamine diphosphate is required as a cofactor.

The catalysed reaction is D-sedoheptulose 7-phosphate + D-glyceraldehyde 3-phosphate = aldehydo-D-ribose 5-phosphate + D-xylulose 5-phosphate. This chain is Putative transketolase C-terminal section, found in Methanocaldococcus jannaschii (strain ATCC 43067 / DSM 2661 / JAL-1 / JCM 10045 / NBRC 100440) (Methanococcus jannaschii).